Consider the following 105-residue polypeptide: Early E3A 12.1 kDa protein (105 aa).

The protein belongs to the adenoviridae E3A-2 family.

Its function is as follows. Not yet known. This chain is Early E3A 12.1 kDa protein, found in Human adenovirus A serotype 12 (HAdV-12).